Consider the following 242-residue polypeptide: Ubiquinone biosynthesis O-methyltransferase (242 aa).

Residues Arg-44, Gly-64, Asp-85, and Met-129 each contribute to the S-adenosyl-L-methionine site.

It belongs to the methyltransferase superfamily. UbiG/COQ3 family.

The enzyme catalyses a 3-demethylubiquinol + S-adenosyl-L-methionine = a ubiquinol + S-adenosyl-L-homocysteine + H(+). It carries out the reaction a 3-(all-trans-polyprenyl)benzene-1,2-diol + S-adenosyl-L-methionine = a 2-methoxy-6-(all-trans-polyprenyl)phenol + S-adenosyl-L-homocysteine + H(+). It participates in cofactor biosynthesis; ubiquinone biosynthesis. In terms of biological role, O-methyltransferase that catalyzes the 2 O-methylation steps in the ubiquinone biosynthetic pathway. The protein is Ubiquinone biosynthesis O-methyltransferase of Yersinia enterocolitica serotype O:8 / biotype 1B (strain NCTC 13174 / 8081).